The following is a 376-amino-acid chain: Chanoclavine-I aldehyde reductase easA (376 aa).

FMN-binding positions include 29-31 (PTT), Ala64, Gln106, and His173. Substrate contacts are provided by His173 and Asn176. Catalysis depends on Tyr178, which acts as the Proton donor. FMN contacts are provided by residues Lys225, Gly297, 323–324 (GR), and Arg324. Residue Tyr351 coordinates substrate.

It belongs to the NADH:flavin oxidoreductase/NADH oxidase family. FMN is required as a cofactor.

It catalyses the reaction dihydrochanoclavine-I aldehyde + NADP(+) = chanoclavine-I aldehyde + NADPH + H(+). It functions in the pathway alkaloid biosynthesis; ergot alkaloid biosynthesis. Its function is as follows. Aldehyde reductase; part of the gene cluster that mediates the biosynthesis of fumiclavanine C, a fungal ergot alkaloid. DmaW catalyzes the first step of ergot alkaloid biosynthesis by condensing dimethylallyl diphosphate (DMAP) and tryptophan to form 4-dimethylallyl-L-tryptophan. The second step is catalyzed by the methyltransferase easF that methylates 4-dimethylallyl-L-tryptophan in the presence of S-adenosyl-L-methionine, resulting in the formation of 4-dimethylallyl-L-abrine. The catalase easC and the FAD-dependent oxidoreductase easE then transform 4-dimethylallyl-L-abrine to chanoclavine-I which is further oxidized by EasD in the presence of NAD(+), resulting in the formation of chanoclavine-I aldehyde. EasA reduces chanoclavine-I aldehyde to dihydrochanoclavine-I aldehyde that spontaneously dehydrates to form 6,8-dimethyl-6,7-didehydroergoline. EasG then catalyzes the reduction of 6,8-dimethyl-6,7-didehydroergoline to form festuclavine. Hydrolysis of festuclavine by easM then leads to the formation of fumigaclavine B which is in turn acetylated by easN to fumigaclavine A. Finally, easL catalyzes the conversion of fumigaclavine A into fumigaclavine C by attaching a dimethylallyl moiety to C-2 of the indole nucleus. The sequence is that of Chanoclavine-I aldehyde reductase easA from Aspergillus fumigatus (strain ATCC MYA-4609 / CBS 101355 / FGSC A1100 / Af293) (Neosartorya fumigata).